The following is a 489-amino-acid chain: UDP-N-acetylmuramoylalanine--D-glutamate ligase (489 aa).

An ATP-binding site is contributed by 126-132 (GTNGKTT).

It belongs to the MurCDEF family.

The protein localises to the cytoplasm. The catalysed reaction is UDP-N-acetyl-alpha-D-muramoyl-L-alanine + D-glutamate + ATP = UDP-N-acetyl-alpha-D-muramoyl-L-alanyl-D-glutamate + ADP + phosphate + H(+). Its pathway is cell wall biogenesis; peptidoglycan biosynthesis. Functionally, cell wall formation. Catalyzes the addition of glutamate to the nucleotide precursor UDP-N-acetylmuramoyl-L-alanine (UMA). The sequence is that of UDP-N-acetylmuramoylalanine--D-glutamate ligase from Mycolicibacterium paratuberculosis (strain ATCC BAA-968 / K-10) (Mycobacterium paratuberculosis).